The chain runs to 598 residues: Rho-related protein racA (598 aa).

11–17 (DGAVGKS) contacts GTP. Residues 32–40 (YVPTVFDNY) carry the Effector region motif. GTP is bound by residues 57-61 (DTAGQ) and 115-118 (TKND). The disordered stretch occupies residues 175 to 210 (ASAKKKGGFFSSSSSSSSSSSSKSSEKSVPIPPVMP). Low complexity predominate over residues 182 to 197 (GFFSSSSSSSSSSSSK). BTB domains lie at 239 to 344 (SDVK…NYLD) and 405 to 472 (SDIQ…PIEE).

The protein in the N-terminal section; belongs to the small GTPase superfamily. Rho family. In terms of assembly, interacts with pakB.

The chain is Rho-related protein racA (racA) from Dictyostelium discoideum (Social amoeba).